A 76-amino-acid polypeptide reads, in one-letter code: uncharacterized protein (76 aa).

A signal peptide spans 1–15; it reads MYLPLLLFCVISCYG.

This is an uncharacterized protein from Magallana gigas (Pacific oyster).